Reading from the N-terminus, the 329-residue chain is Beta-ketoacyl-[acyl-carrier-protein] synthase III (329 aa).

Catalysis depends on residues Cys123 and His256. The ACP-binding stretch occupies residues 257 to 261; it reads QANIR. Asn286 is a catalytic residue.

This sequence belongs to the thiolase-like superfamily. FabH family. Homodimer.

It is found in the cytoplasm. It catalyses the reaction malonyl-[ACP] + acetyl-CoA + H(+) = 3-oxobutanoyl-[ACP] + CO2 + CoA. It functions in the pathway lipid metabolism; fatty acid biosynthesis. In terms of biological role, catalyzes the condensation reaction of fatty acid synthesis by the addition to an acyl acceptor of two carbons from malonyl-ACP. Catalyzes the first condensation reaction which initiates fatty acid synthesis and may therefore play a role in governing the total rate of fatty acid production. Possesses both acetoacetyl-ACP synthase and acetyl transacylase activities. Its substrate specificity determines the biosynthesis of branched-chain and/or straight-chain of fatty acids. The polypeptide is Beta-ketoacyl-[acyl-carrier-protein] synthase III (Burkholderia mallei (strain NCTC 10247)).